The sequence spans 431 residues: 3-phosphoshikimate 1-carboxyvinyltransferase (431 aa).

The 3-phosphoshikimate site is built by lysine 26, serine 27, and arginine 31. Residue lysine 26 coordinates phosphoenolpyruvate. The phosphoenolpyruvate site is built by glycine 100 and arginine 129. 3-phosphoshikimate is bound by residues serine 175, serine 176, glutamine 177, aspartate 308, and glutamine 335. Glutamine 177 serves as a coordination point for phosphoenolpyruvate. Aspartate 308 functions as the Proton acceptor in the catalytic mechanism. Positions 339, 381, and 412 each coordinate phosphoenolpyruvate.

Belongs to the EPSP synthase family. In terms of assembly, monomer.

It localises to the cytoplasm. The enzyme catalyses 3-phosphoshikimate + phosphoenolpyruvate = 5-O-(1-carboxyvinyl)-3-phosphoshikimate + phosphate. Its pathway is metabolic intermediate biosynthesis; chorismate biosynthesis; chorismate from D-erythrose 4-phosphate and phosphoenolpyruvate: step 6/7. In terms of biological role, catalyzes the transfer of the enolpyruvyl moiety of phosphoenolpyruvate (PEP) to the 5-hydroxyl of shikimate-3-phosphate (S3P) to produce enolpyruvyl shikimate-3-phosphate and inorganic phosphate. This chain is 3-phosphoshikimate 1-carboxyvinyltransferase, found in Opitutus terrae (strain DSM 11246 / JCM 15787 / PB90-1).